The primary structure comprises 282 residues: Aquaporin NIP1-1 (282 aa).

2 consecutive transmembrane segments (helical) span residues 46–66 (IIAE…AVTI) and 74–94 (ITFP…VYAV). An NPA 1 motif is present at residues 103-105 (NPA). The next 3 membrane-spanning stretches (helical) occupy residues 125–145 (VLAQ…MFGG), 162–182 (SLVI…GVAT), and 186–206 (AIGE…VLIA). Positions 215 to 217 (NPA) match the NPA 2 motif. A helical transmembrane segment spans residues 232–252 (IWVYVVGPVVGAVAGAWAYNL).

The protein belongs to the MIP/aquaporin (TC 1.A.8) family. NIP (TC 1.A.8.12) subfamily.

It is found in the membrane. Functionally, aquaporins facilitate the transport of water and small neutral solutes across cell membranes. This Zea mays (Maize) protein is Aquaporin NIP1-1 (NIP1-1).